The following is a 447-amino-acid chain: Glutamate-1-semialdehyde 2,1-aminomutase (447 aa).

The residue at position 277 (Lys-277) is an N6-(pyridoxal phosphate)lysine.

Belongs to the class-III pyridoxal-phosphate-dependent aminotransferase family. HemL subfamily. In terms of assembly, homodimer. Pyridoxal 5'-phosphate is required as a cofactor.

Its subcellular location is the cytoplasm. The catalysed reaction is (S)-4-amino-5-oxopentanoate = 5-aminolevulinate. The protein operates within porphyrin-containing compound metabolism; protoporphyrin-IX biosynthesis; 5-aminolevulinate from L-glutamyl-tRNA(Glu): step 2/2. This Arthrobacter sp. (strain FB24) protein is Glutamate-1-semialdehyde 2,1-aminomutase.